We begin with the raw amino-acid sequence, 130 residues long: Small ribosomal subunit protein uS9 (130 aa).

Positions 102–130 are disordered; that stretch reads GFLTRDPRMKERKKYGLKKARRAPQFSKR. The span at 111-130 shows a compositional bias: basic residues; the sequence is KERKKYGLKKARRAPQFSKR.

The protein belongs to the universal ribosomal protein uS9 family.

This is Small ribosomal subunit protein uS9 from Clostridium novyi (strain NT).